Reading from the N-terminus, the 1272-residue chain is AF4/FMR2 family member 2 (1272 aa).

3 disordered regions span residues 93 to 183 (IPKN…LTQD), 201 to 225 (QIGEAEESNPSAKEDSNPNSSGEDA), and 283 to 302 (AYVRPMDGQDQAPDISPTLK). Residues 97 to 107 (SVPQNPNNKNE) show a composition bias toward polar residues. The segment covering 151-160 (SKPEWSRDSH) has biased composition (basic and acidic residues). The segment covering 161 to 183 (NPSTVLASQASGQPNKMQTLTQD) has biased composition (polar residues). Ser391 is modified (phosphoserine). Disordered stretches follow at residues 418–491 (KAKP…KWQL), 535–687 (TNAS…DQEE), 779–829 (SLHA…PEKK), and 842–903 (PPCI…QDKN). Residues 426–438 (VNPPLATPQPPPA) are compositionally biased toward pro residues. The span at 439-452 (VQASGGSGSSSESE) shows a compositional bias: low complexity. Thr478 bears the Phosphothreonine mark. The segment covering 543–558 (EPKERPLLSLIREKAR) has biased composition (basic and acidic residues). Positions 576–586 (STTSETVSQRT) are enriched in polar residues. Positions 616-629 (PKEKESVELHDPPR) are enriched in basic and acidic residues. Positions 630–640 (GRNKATAHKPA) are enriched in basic residues. Over residues 818–829 (PTEVAEKIPEKK) the composition is skewed to basic and acidic residues. Pro residues-rich tracts occupy residues 844–853 (CISPAPPHKP) and 874–883 (FPPPLSPLPE).

The protein belongs to the AF4 family.

It is found in the nucleus speckle. Functionally, RNA-binding protein. Might be involved in alternative splicing regulation through an interaction with G-quartet RNA structure. This is AF4/FMR2 family member 2 (AFF2) from Pan troglodytes (Chimpanzee).